Reading from the N-terminus, the 927-residue chain is DNA mismatch repair protein MutS (927 aa).

The segment at 44–80 (DESLKRPRNRHKPTSVPSIPLDSESQEQLETADNDND) is disordered. The span at 67-79 (ESQEQLETADNDN) shows a compositional bias: acidic residues. 725–732 (GPNASGKS) lines the ATP pocket.

This sequence belongs to the DNA mismatch repair MutS family.

This protein is involved in the repair of mismatches in DNA. It is possible that it carries out the mismatch recognition step. This protein has a weak ATPase activity. The sequence is that of DNA mismatch repair protein MutS from Prochlorococcus marinus (strain MIT 9303).